Here is a 137-residue protein sequence, read N- to C-terminus: Structural protein A137R (137 aa).

Belongs to the asfivirus A137R family. As to quaternary structure, interacts with host TBK1.

Its subcellular location is the virion. It localises to the host cytoplasm. Its function is as follows. Plays a role in the inhibition of the host innate immune response. Mechanistically, promotes the autophagy-mediated lysosomal degradation of host TBK1 and affects IRF3 nuclear translocation to block type I IFN production. This Ornithodoros (relapsing fever ticks) protein is Structural protein A137R.